Consider the following 148-residue polypeptide: Lysozyme C (148 aa).

A signal peptide spans 1-18 (MKALLLLGLLLLSVTVQG). One can recognise a C-type lysozyme domain in the interval 19–148 (KIFERCDLAR…VSQYVRNCGV (130 aa)). Disulfide bonds link C24–C146, C48–C134, C83–C99, and C95–C113. Active-site residues include E53 and D71.

It belongs to the glycosyl hydrolase 22 family. In terms of assembly, monomer.

The enzyme catalyses Hydrolysis of (1-&gt;4)-beta-linkages between N-acetylmuramic acid and N-acetyl-D-glucosamine residues in a peptidoglycan and between N-acetyl-D-glucosamine residues in chitodextrins.. In terms of biological role, lysozymes have primarily a bacteriolytic function; those in tissues and body fluids are associated with the monocyte-macrophage system and enhance the activity of immunoagents. This Halichoerus grypus (Gray seal) protein is Lysozyme C (LYZ).